The sequence spans 925 residues: Aspulvinone E synthetase melA (925 aa).

The tract at residues 11 to 434 (ETAAARNGDG…GGRAKETIII (424 aa)) is adenylation (A) domain. A Carrier domain is found at 564 to 644 (SPKNDFEKGL…ELAAALDNLY (81 aa)). Residue S601 is modified to O-(pantetheine 4'-phosphoryl)serine. The interval 663-923 (PLWLVHPGAG…KILRSALAER (261 aa)) is thioesterase (TE) domain.

Belongs to the ATP-dependent AMP-binding enzyme family.

Its subcellular location is the cytoplasm. Functionally, nonribosomal peptide synthase; part of the gene cluster that mediates the biosynthesis of Asp-melanin, a pigment that confers resistance against UV light and hampers phagocytosis by soil amoeba. The nonribosomal peptide synthase melA converts 4-hydroxyphenylpyruvate (4-HPPA) to aspulvinone E. The tyrosinase tyrP then performs hydroxylations of both aromatic moieties of aspulvinone E. The product of tyrP is highly unstable, and, due to the high reactivity of methides and ortho-diquinones, the polymeric Asp-melanin forms spontaneously. This is Aspulvinone E synthetase melA from Aspergillus terreus.